Here is a 321-residue protein sequence, read N- to C-terminus: Lipoyl synthase (321 aa).

Residues Cys68, Cys73, Cys79, Cys94, Cys98, Cys101, and Ser308 each contribute to the [4Fe-4S] cluster site. The Radical SAM core domain maps to 80–297 (FNHGTATFMI…KAEAIAMGFT (218 aa)).

The protein belongs to the radical SAM superfamily. Lipoyl synthase family. The cofactor is [4Fe-4S] cluster.

The protein resides in the cytoplasm. The catalysed reaction is [[Fe-S] cluster scaffold protein carrying a second [4Fe-4S](2+) cluster] + N(6)-octanoyl-L-lysyl-[protein] + 2 oxidized [2Fe-2S]-[ferredoxin] + 2 S-adenosyl-L-methionine + 4 H(+) = [[Fe-S] cluster scaffold protein] + N(6)-[(R)-dihydrolipoyl]-L-lysyl-[protein] + 4 Fe(3+) + 2 hydrogen sulfide + 2 5'-deoxyadenosine + 2 L-methionine + 2 reduced [2Fe-2S]-[ferredoxin]. It participates in protein modification; protein lipoylation via endogenous pathway; protein N(6)-(lipoyl)lysine from octanoyl-[acyl-carrier-protein]: step 2/2. Its function is as follows. Catalyzes the radical-mediated insertion of two sulfur atoms into the C-6 and C-8 positions of the octanoyl moiety bound to the lipoyl domains of lipoate-dependent enzymes, thereby converting the octanoylated domains into lipoylated derivatives. This is Lipoyl synthase from Pectobacterium carotovorum subsp. carotovorum (strain PC1).